Reading from the N-terminus, the 108-residue chain is ATP synthase peripheral stalk subunit F6, mitochondrial (108 aa).

The transit peptide at M1–F32 directs the protein to the mitochondrion. 3 positions are modified to N6-acetyllysine: K41, K46, and K79. Residues K84, K94, and K99 each carry the N6-acetyllysine; alternate modification. N6-succinyllysine; alternate is present on residues K84, K94, and K99. The residue at position 105 (K105) is an N6-acetyllysine. The residue at position 108 (S108) is a Phosphoserine.

This sequence belongs to the eukaryotic ATPase subunit F6 family. Component of the ATP synthase complex composed at least of ATP5F1A/subunit alpha, ATP5F1B/subunit beta, ATP5MC1/subunit c (homooctomer), MT-ATP6/subunit a, MT-ATP8/subunit 8, ATP5ME/subunit e, ATP5MF/subunit f, ATP5MG/subunit g, ATP5MK/subunit k, ATP5MJ/subunit j, ATP5F1C/subunit gamma, ATP5F1D/subunit delta, ATP5F1E/subunit epsilon, ATP5PF/subunit F6, ATP5PB/subunit b, ATP5PD/subunit d, ATP5PO/subunit OSCP. ATP synthase complex consists of a soluble F(1) head domain (subunits alpha(3) and beta(3)) - the catalytic core - and a membrane F(0) domain - the membrane proton channel (subunits c, a, 8, e, f, g, k and j). These two domains are linked by a central stalk (subunits gamma, delta, and epsilon) rotating inside the F1 region and a stationary peripheral stalk (subunits F6, b, d, and OSCP).

The protein resides in the mitochondrion. Its subcellular location is the mitochondrion inner membrane. Its function is as follows. Subunit F6, of the mitochondrial membrane ATP synthase complex (F(1)F(0) ATP synthase or Complex V) that produces ATP from ADP in the presence of a proton gradient across the membrane which is generated by electron transport complexes of the respiratory chain. ATP synthase complex consist of a soluble F(1) head domain - the catalytic core - and a membrane F(1) domain - the membrane proton channel. These two domains are linked by a central stalk rotating inside the F(1) region and a stationary peripheral stalk. During catalysis, ATP synthesis in the catalytic domain of F(1) is coupled via a rotary mechanism of the central stalk subunits to proton translocation. In vivo, can only synthesize ATP although its ATP hydrolase activity can be activated artificially in vitro. Part of the complex F(0) domain. Part of the complex F(0) domain and the peripheric stalk, which acts as a stator to hold the catalytic alpha(3)beta(3) subcomplex and subunit a/ATP6 static relative to the rotary elements. The chain is ATP synthase peripheral stalk subunit F6, mitochondrial from Mus musculus (Mouse).